Consider the following 557-residue polypeptide: 2,3-bisphosphoglycerate-independent phosphoglycerate mutase 1 (557 aa).

Positions 27 and 80 each coordinate Mn(2+). The Phosphoserine intermediate role is filled by Ser80. Substrate-binding positions include His139, 169–170, Arg205, Arg212, 285–288, and Lys360; these read RD and RADR. Residues Asp429, His433, Asp470, His471, and His500 each contribute to the Mn(2+) site.

Belongs to the BPG-independent phosphoglycerate mutase family. Monomer. Mn(2+) is required as a cofactor.

Its subcellular location is the cytoplasm. It catalyses the reaction (2R)-2-phosphoglycerate = (2R)-3-phosphoglycerate. It functions in the pathway carbohydrate degradation; glycolysis; pyruvate from D-glyceraldehyde 3-phosphate: step 3/5. Catalyzes the interconversion of 2-phosphoglycerate (2-PGA) and 3-phosphoglycerate (3-PGA). Required for guard cell function (e.g. blue light-, abscisic acid- (ABA), and low CO(2)-regulated stomatal movements) and fertility (e.g. pollen grains production). The protein is 2,3-bisphosphoglycerate-independent phosphoglycerate mutase 1 (PGM1) of Arabidopsis thaliana (Mouse-ear cress).